The following is a 2968-amino-acid chain: Polyketide synthase 37 (2968 aa).

In terms of domain architecture, Ketosynthase family 3 (KS3) spans 32–454 (KEPIAIIGIG…GSNSSLFLSS (423 aa)). Residues Cys-198, His-338, and His-378 each act as for beta-ketoacyl synthase activity in the active site. The malonyl-CoA:ACP transacylase (MAT) domain stretch occupies residues 624–950 (FIFSGQGQQW…LSTLSKNSNS (327 aa)). Ser-718 (for malonyltransferase activity) is an active-site residue. Positions 1017–1157 (PPMFISLDRK…GIIKYGTNYL (141 aa)) are N-terminal hotdog fold. The 334-residue stretch at 1017–1350 (PPMFISLDRK…FKGINSSSSS (334 aa)) folds into the PKS/mFAS DH domain. The segment at 1031-1345 (TPSFEVRLNQ…LTNLEFKGIN (315 aa)) is dehydratase (DH) domain. His-1049 acts as the Proton acceptor; for dehydratase activity in catalysis. The tract at residues 1183 to 1350 (FKSFNSNEFY…FKGINSSSSS (168 aa)) is C-terminal hotdog fold. Catalysis depends on Asp-1257, which acts as the Proton donor; for dehydratase activity. The segment at 1522 to 1547 (SCGGGGGSTNNTISNSSSSISSIDNG) is disordered. The span at 1530-1547 (TNNTISNSSSSISSIDNG) shows a compositional bias: low complexity. Residues 1718 to 2053 (GIISDLKIKQ…SGNHIGKILI (336 aa)) are enoyl reductase (ER) domain. The interval 2083–2277 (TYIFTGFGGL…LKSSCIHLAS (195 aa)) is ketoreductase (KR) domain. The tract at residues 2379–2400 (GDGSFDDLNQLEDEGQQGFGNG) is disordered. One can recognise a Carrier domain in the interval 2421–2498 (FDNDFYTKSI…STVELIKNKL (78 aa)). Ser-2458 is modified (O-(pantetheine 4'-phosphoryl)serine). Residues 2568-2589 (SSSSNNSNSKNELTSPPPSAKR) are disordered. Positions 2707–2968 (ISHVVGVTST…IEAILFKLIK (262 aa)) are chalcone synthase. Cys-2747 is an active-site residue.

Pantetheine 4'-phosphate serves as cofactor.

The enzyme catalyses (E)-4-coumaroyl-CoA + 3 malonyl-CoA + 3 H(+) = 2',4,4',6'-tetrahydroxychalcone + 3 CO2 + 4 CoA. It carries out the reaction hexanoyl-CoA + 3 malonyl-CoA + 3 H(+) = 2,4,6-trihydroxyphenylhexan-1-one + 3 CO2 + 4 CoA. The protein operates within secondary metabolite biosynthesis; flavonoid biosynthesis. In terms of biological role, polyketide synthase; part of the gene cluster that mediates the biosynthesis of DIF-1 (Differentiation Inducing Factor-1), a signal molecule involved in the differentiation of pstO (prestalk-O) cells. The three-step process begins with the formation of (2,4,6-trihydroxyphenyl)-1-hexan-1-one (THPH) by the polyketide synthase StlB. THPH is then dichlorinated by the flavin-dependent halogenase ChlA. The last step of DIF-1 biosynthesis is the O-methylation of dichloro-THPH (or des-methyl-DIF-1) by the methyltransferase DmtA to yield DIF-1. The chain is Polyketide synthase 37 (StlB) from Dictyostelium discoideum (Social amoeba).